The chain runs to 168 residues: Ubiquitin-conjugating enzyme E2 7 (168 aa).

The interval 1–21 (MATAPARRASSSRSSSEISRT) is disordered. A UBC core domain is found at 6–166 (ARRASSSRSS…VRRAVRKSQE (161 aa)). Residue C92 is the Glycyl thioester intermediate of the active site.

It belongs to the ubiquitin-conjugating enzyme family.

It carries out the reaction S-ubiquitinyl-[E1 ubiquitin-activating enzyme]-L-cysteine + [E2 ubiquitin-conjugating enzyme]-L-cysteine = [E1 ubiquitin-activating enzyme]-L-cysteine + S-ubiquitinyl-[E2 ubiquitin-conjugating enzyme]-L-cysteine.. It functions in the pathway protein modification; protein ubiquitination. Functionally, catalyzes the covalent attachment of ubiquitin to other proteins so as to signal them for selective protein degradation. Involved in the formation of multiubiquitin chains. The protein is Ubiquitin-conjugating enzyme E2 7 (UBC7) of Triticum aestivum (Wheat).